The following is a 511-amino-acid chain: Maturase K (511 aa).

This sequence belongs to the intron maturase 2 family. MatK subfamily.

It localises to the plastid. Its subcellular location is the chloroplast. Usually encoded in the trnK tRNA gene intron. Probably assists in splicing its own and other chloroplast group II introns. This is Maturase K from Adesmia lanata.